The primary structure comprises 143 residues: Large ribosomal subunit protein uL11 (143 aa).

The protein belongs to the universal ribosomal protein uL11 family. In terms of assembly, part of the ribosomal stalk of the 50S ribosomal subunit. Interacts with L10 and the large rRNA to form the base of the stalk. L10 forms an elongated spine to which L12 dimers bind in a sequential fashion forming a multimeric L10(L12)X complex. In terms of processing, one or more lysine residues are methylated.

Forms part of the ribosomal stalk which helps the ribosome interact with GTP-bound translation factors. The chain is Large ribosomal subunit protein uL11 from Erythrobacter litoralis (strain HTCC2594).